We begin with the raw amino-acid sequence, 468 residues long: 3-isopropylmalate dehydratase large subunit (468 aa).

The [4Fe-4S] cluster site is built by Cys-347, Cys-407, and Cys-410.

It belongs to the aconitase/IPM isomerase family. LeuC type 1 subfamily. In terms of assembly, heterodimer of LeuC and LeuD. Requires [4Fe-4S] cluster as cofactor.

It carries out the reaction (2R,3S)-3-isopropylmalate = (2S)-2-isopropylmalate. It participates in amino-acid biosynthesis; L-leucine biosynthesis; L-leucine from 3-methyl-2-oxobutanoate: step 2/4. Functionally, catalyzes the isomerization between 2-isopropylmalate and 3-isopropylmalate, via the formation of 2-isopropylmaleate. This Glaesserella parasuis serovar 5 (strain SH0165) (Haemophilus parasuis) protein is 3-isopropylmalate dehydratase large subunit.